The primary structure comprises 146 residues: Large ribosomal subunit protein uL15 (146 aa).

The interval methionine 1–glutamine 54 is disordered.

It belongs to the universal ribosomal protein uL15 family. As to quaternary structure, part of the 50S ribosomal subunit.

In terms of biological role, binds to the 23S rRNA. This chain is Large ribosomal subunit protein uL15, found in Lachnoclostridium phytofermentans (strain ATCC 700394 / DSM 18823 / ISDg) (Clostridium phytofermentans).